Reading from the N-terminus, the 159-residue chain is Large ribosomal subunit protein uL10 (159 aa).

It belongs to the universal ribosomal protein uL10 family. As to quaternary structure, part of the ribosomal stalk of the 50S ribosomal subunit. The N-terminus interacts with L11 and the large rRNA to form the base of the stalk. The C-terminus forms an elongated spine to which L12 dimers bind in a sequential fashion forming a multimeric L10(L12)X complex.

In terms of biological role, forms part of the ribosomal stalk, playing a central role in the interaction of the ribosome with GTP-bound translation factors. The protein is Large ribosomal subunit protein uL10 of Nautilia profundicola (strain ATCC BAA-1463 / DSM 18972 / AmH).